The primary structure comprises 723 residues: Multiple organellar RNA editing factor 4, mitochondrial (723 aa).

A mitochondrion-targeting transit peptide spans 1 to 64 (MAMFSHRLRR…RLFSTTQYQY (64 aa)). Disordered stretches follow at residues 180–303 (ITPG…GQTQ), 318–474 (RQEM…EGQP), and 663–723 (QNGG…NSRI). Residues 191 to 204 (EGFDSLKKESKPEQ) show a composition bias toward basic and acidic residues. 4 stretches are compositionally biased toward polar residues: residues 219–233 (TSGQVQGQGSLTLPD), 273–303 (GQWQSRGQGNSFQGSFKQSQGTLPVRKGQTQ), 327–365 (GQAQRSQMPSSQGTLRQGQAQGSQRPSNQVGYNQGQGAQ), and 373–430 (QGAQ…NYSP). Low complexity-rich tracts occupy residues 459-474 (QGQGTPLPGQGQEGQP) and 682-695 (QGFSGQGQNQTFQQ). Residues 714–723 (TETRKPNSRI) show a composition bias toward basic and acidic residues.

It belongs to the MORF family. In terms of assembly, heterodimers with MORF8/RIP1, MORF1/RIP8 and MORF3/RIP3.

The protein localises to the mitochondrion. Functionally, involved in organellar RNA editing. Required for the processing of few RNA editing site in mitochondria. The chain is Multiple organellar RNA editing factor 4, mitochondrial from Arabidopsis thaliana (Mouse-ear cress).